The sequence spans 124 residues: Flowering-promoting factor 1-like protein 1 (124 aa).

Residues 19–42 (PYNQSAGDSSESSSSGGNQQQRMR) are disordered. The segment covering 22–39 (QSAGDSSESSSSGGNQQQ) has biased composition (low complexity).

Belongs to the FPF1 family. In terms of tissue distribution, expressed in roots, flowers, and at a low level, in leaves.

Functionally, modulates the competence to flowering of apical meristems. The sequence is that of Flowering-promoting factor 1-like protein 1 (FLP1) from Arabidopsis thaliana (Mouse-ear cress).